A 159-amino-acid chain; its full sequence is Putative transmembrane protein ORF159 (159 aa).

Transmembrane regions (helical) follow at residues 20–40 (LLLSLLLLLSTICGVLPLSLF) and 59–79 (IIAVDIASAICFIIFCNGFCC). The short motif at 106–108 (RGD) is the Cell attachment site element.

Its subcellular location is the host membrane. The protein is Putative transmembrane protein ORF159 of Acidianus sp. F28 (AFV-2).